The sequence spans 679 residues: UvrABC system protein B (679 aa).

The region spanning 25-190 (EGVNQGQRYQ…SRNDFDITRG (166 aa)) is the Helicase ATP-binding domain. 38–45 (GATGTGKT) lines the ATP pocket. The Beta-hairpin motif lies at 91–114 (YYDYYQPEAYVPVSDTYIAKTASI). The Helicase C-terminal domain maps to 429–591 (QVDDLLAEIR…IVPRPAGKRA (163 aa)). In terms of domain architecture, UVR spans 639 to 674 (PELIDQLETKMKEAAKNLNFEEAASLRDRIKKFRQK).

Belongs to the UvrB family. Forms a heterotetramer with UvrA during the search for lesions. Interacts with UvrC in an incision complex.

The protein localises to the cytoplasm. Its function is as follows. The UvrABC repair system catalyzes the recognition and processing of DNA lesions. A damage recognition complex composed of 2 UvrA and 2 UvrB subunits scans DNA for abnormalities. Upon binding of the UvrA(2)B(2) complex to a putative damaged site, the DNA wraps around one UvrB monomer. DNA wrap is dependent on ATP binding by UvrB and probably causes local melting of the DNA helix, facilitating insertion of UvrB beta-hairpin between the DNA strands. Then UvrB probes one DNA strand for the presence of a lesion. If a lesion is found the UvrA subunits dissociate and the UvrB-DNA preincision complex is formed. This complex is subsequently bound by UvrC and the second UvrB is released. If no lesion is found, the DNA wraps around the other UvrB subunit that will check the other stand for damage. The polypeptide is UvrABC system protein B (Prochlorococcus marinus (strain MIT 9303)).